A 240-amino-acid polypeptide reads, in one-letter code: 1-(5-phosphoribosyl)-5-[(5-phosphoribosylamino)methylideneamino] imidazole-4-carboxamide isomerase (240 aa).

The active-site Proton acceptor is D8. Residue D129 is the Proton donor of the active site.

The protein belongs to the HisA/HisF family.

The protein resides in the cytoplasm. The enzyme catalyses 1-(5-phospho-beta-D-ribosyl)-5-[(5-phospho-beta-D-ribosylamino)methylideneamino]imidazole-4-carboxamide = 5-[(5-phospho-1-deoxy-D-ribulos-1-ylimino)methylamino]-1-(5-phospho-beta-D-ribosyl)imidazole-4-carboxamide. It functions in the pathway amino-acid biosynthesis; L-histidine biosynthesis; L-histidine from 5-phospho-alpha-D-ribose 1-diphosphate: step 4/9. This is 1-(5-phosphoribosyl)-5-[(5-phosphoribosylamino)methylideneamino] imidazole-4-carboxamide isomerase from Caldanaerobacter subterraneus subsp. tengcongensis (strain DSM 15242 / JCM 11007 / NBRC 100824 / MB4) (Thermoanaerobacter tengcongensis).